Reading from the N-terminus, the 279-residue chain is Large ribosomal subunit protein mL46 (279 aa).

K230 is subject to N6-acetyllysine.

The protein belongs to the mitochondrion-specific ribosomal protein mL46 family. As to quaternary structure, component of the mitochondrial ribosome large subunit (39S) which comprises a 16S rRNA and about 50 distinct proteins.

It localises to the mitochondrion. The protein is Large ribosomal subunit protein mL46 (MRPL46) of Pongo abelii (Sumatran orangutan).